The following is a 105-amino-acid chain: Platelet factor 4 (105 aa).

The N-terminal stretch at 1–29 (MSAAAVFRGLRPSPELLLLGLLLLPAVVA) is a signal peptide. The O-linked (GalNAc...) threonine; partial glycan is linked to threonine 31. 2 cysteine pairs are disulfide-bonded: cysteine 44-cysteine 71 and cysteine 46-cysteine 87. Serine 61 carries the phosphoserine modification. Residue 96–102 (KKIIKKL) coordinates heparin.

This sequence belongs to the intercrine alpha (chemokine CxC) family. In terms of assembly, homotetramer. Interacts with TNFAIP6 (via Link domain). Interacts with CCR1. Interacts with CXCR3. Interacts with THBD; this interaction enhances generation of activated protein C. Post-translationally, O-linked glycan consists of Gal-GalNAc disaccharide which is modified with sialic acid residues (microheterogeneity).

It is found in the secreted. Chemokine released during platelet aggregation that plays a role in different biological processes including hematopoiesis, cell proliferation, differentiation, and activation. Acts via different functional receptors including CCR1, CXCR3A or CXCR3B. Upon interaction with CXCR3A receptor, induces activated T-lymphocytes migration mediated via downstream Ras/extracellular signal-regulated kinase (ERK) signaling. Neutralizes the anticoagulant effect of heparin by binding more strongly to heparin than to the chondroitin-4-sulfate chains of the carrier molecule. Plays a role in the inhibition of hematopoiesis and in the maintenance of hematopoietic stem cell (HSC) quiescence. Chemotactic for neutrophils and monocytes via CCR1. Inhibits endothelial cell proliferation. In cooperation with toll-like receptor 8/TLR8, induces chromatin remodeling and activates inflammatory gene expression via the TBK1-IRF5 axis. In addition, induces myofibroblast differentiation and collagen synthesis in different precursor cells, including endothelial cells, by stimulating endothelial-to-mesenchymal transition. Interacts with thrombomodulin/THBD to enhance the activation of protein C and thus potentiates its anticoagulant activity. In Rattus norvegicus (Rat), this protein is Platelet factor 4 (Pf4).